The primary structure comprises 304 residues: Polyisoprenyl-teichoic acid--peptidoglycan teichoic acid transferase TagU (304 aa).

Residues 1 to 3 (MKK) are Cytoplasmic-facing. The helical; Signal-anchor for type II membrane protein transmembrane segment at 4–24 (ALIAIGLILGTITVAIIGYGI) threads the bilayer. Residues 25 to 304 (YLYSSIQNTA…GELKSHLELS (280 aa)) are Extracellular-facing.

This sequence belongs to the LytR/CpsA/Psr (LCP) family.

Its subcellular location is the cell membrane. It participates in cell wall biogenesis. Its function is as follows. May catalyze the final step in cell wall teichoic acid biosynthesis, the transfer of the anionic cell wall polymers (APs) from their lipid-linked precursor to the cell wall peptidoglycan (PG). The polypeptide is Polyisoprenyl-teichoic acid--peptidoglycan teichoic acid transferase TagU (Halalkalibacterium halodurans (strain ATCC BAA-125 / DSM 18197 / FERM 7344 / JCM 9153 / C-125) (Bacillus halodurans)).